The following is an 87-amino-acid chain: Small ribosomal subunit protein bS20 (87 aa).

Positions 1 to 22 (MANHKSALKRHKQSLKRAARNR) are disordered.

This sequence belongs to the bacterial ribosomal protein bS20 family.

Binds directly to 16S ribosomal RNA. The sequence is that of Small ribosomal subunit protein bS20 from Nitratidesulfovibrio vulgaris (strain DP4) (Desulfovibrio vulgaris).